The following is a 495-amino-acid chain: Glutamyl-tRNA(Gln) amidotransferase subunit A (495 aa).

Active-site charge relay system residues include lysine 78 and serine 158. The active-site Acyl-ester intermediate is the serine 182.

It belongs to the amidase family. GatA subfamily. In terms of assembly, heterotrimer of A, B and C subunits.

It carries out the reaction L-glutamyl-tRNA(Gln) + L-glutamine + ATP + H2O = L-glutaminyl-tRNA(Gln) + L-glutamate + ADP + phosphate + H(+). Allows the formation of correctly charged Gln-tRNA(Gln) through the transamidation of misacylated Glu-tRNA(Gln) in organisms which lack glutaminyl-tRNA synthetase. The reaction takes place in the presence of glutamine and ATP through an activated gamma-phospho-Glu-tRNA(Gln). This Ruegeria sp. (strain TM1040) (Silicibacter sp.) protein is Glutamyl-tRNA(Gln) amidotransferase subunit A.